Consider the following 183-residue polypeptide: Ribosome-recycling factor (183 aa).

Belongs to the RRF family.

It localises to the cytoplasm. Responsible for the release of ribosomes from messenger RNA at the termination of protein biosynthesis. May increase the efficiency of translation by recycling ribosomes from one round of translation to another. The protein is Ribosome-recycling factor of Ureaplasma urealyticum serovar 10 (strain ATCC 33699 / Western).